Here is a 135-residue protein sequence, read N- to C-terminus: UPF0355 protein SACOL0457 (135 aa).

It belongs to the UPF0355 family.

The sequence is that of UPF0355 protein SACOL0457 from Staphylococcus aureus (strain COL).